The sequence spans 99 residues: METLSFEFPAGQPPKGRALVGCVGSGDLEVLLEPGTPGTLTIQVQTSVNGAEQRWQHLFERIFQEQTPPALNIDIHDFGATPGVVRLRLEQGFEEIGHD.

Residue serine 25 is modified to O-(phosphoribosyl dephospho-coenzyme A)serine.

It belongs to the MdcC family. Covalently binds the prosthetic group of malonate decarboxylase.

It localises to the cytoplasm. Subunit of malonate decarboxylase, it is an acyl carrier protein to which acetyl and malonyl thioester residues are bound via a 2'-(5''-phosphoribosyl)-3'-dephospho-CoA prosthetic group and turn over during the catalytic mechanism. In Pseudomonas fluorescens (strain SBW25), this protein is Malonate decarboxylase acyl carrier protein.